A 234-amino-acid polypeptide reads, in one-letter code: Peroxiredoxin-2E, chloroplastic (234 aa).

Residues 1-70 constitute a chloroplast transit peptide; it reads MATSLSVSRF…TRSFATTPVT (70 aa). Residues 73–234 form the Thioredoxin domain; it reads ISVGDKLPDS…SSAEDMLKAL (162 aa). Position 82 is a phosphoserine (S82). Residue C121 is the Cysteine sulfenic acid (-SOH) intermediate of the active site.

Belongs to the peroxiredoxin family. Prx5 subfamily. Monomer. As to expression, expressed in all tissues but predominantly in buds, siliques and seeds.

The protein resides in the plastid. It is found in the chloroplast stroma. The catalysed reaction is [glutaredoxin]-dithiol + a hydroperoxide = [glutaredoxin]-disulfide + an alcohol + H2O. Functionally, thiol-specific peroxidase that catalyzes the reduction of hydrogen peroxide and organic hydroperoxides to water and alcohols, respectively. Plays a role in cell protection against oxidative stress by detoxifying peroxides. May be involved in chloroplast redox homeostasis. The chain is Peroxiredoxin-2E, chloroplastic (PRXIIE) from Arabidopsis thaliana (Mouse-ear cress).